Reading from the N-terminus, the 322-residue chain is GDSL esterase/lipase At2g04020 (322 aa).

An N-terminal signal peptide occupies residues 1-26 (MGLPSSLESYLLLILLSFLNVSTIYS). Serine 50 serves as the catalytic Nucleophile. An N-linked (GlcNAc...) asparagine glycan is attached at asparagine 260. Residues aspartate 296 and histidine 299 contribute to the active site.

The protein belongs to the 'GDSL' lipolytic enzyme family.

It is found in the secreted. The protein is GDSL esterase/lipase At2g04020 of Arabidopsis thaliana (Mouse-ear cress).